The primary structure comprises 503 residues: Probable apyrase 4 (503 aa).

Over residues 1-14 (MQRSNARSRSNINS) the composition is skewed to low complexity. A disordered region spans residues 1 to 39 (MQRSNARSRSNINSDMVDPPEVQTSPGNHRSSPSTAAKP). The Cytoplasmic portion of the chain corresponds to 1 to 45 (MQRSNARSRSNINSDMVDPPEVQTSPGNHRSSPSTAAKPKSKRTK). The chain crosses the membrane as a helical; Signal-anchor for type II membrane protein span at residues 46–66 (SIIFVIVACVTIALGLLFIGY). Topologically, residues 67–503 (SILRSGRNRR…DLSNVAKYKI (437 aa)) are extracellular. Position 83-93 (83-93 (VIIDGGSSGTR)) interacts with ATP. The active-site Proton acceptor is the Glu206. Residue 230-240 (GIVELGGASAQ) participates in ATP binding. N-linked (GlcNAc...) asparagine glycans are attached at residues Asn261, Asn293, and Asn338.

Belongs to the GDA1/CD39 NTPase family. It depends on Ca(2+) as a cofactor. In terms of tissue distribution, expressed both in the primary root and lateral root but not in the rosette leaves.

Its subcellular location is the membrane. It carries out the reaction a ribonucleoside 5'-triphosphate + 2 H2O = a ribonucleoside 5'-phosphate + 2 phosphate + 2 H(+). Catalyzes the hydrolysis of phosphoanhydride bonds of nucleoside tri- and di-phosphates. This chain is Probable apyrase 4 (APY4), found in Arabidopsis thaliana (Mouse-ear cress).